A 114-amino-acid polypeptide reads, in one-letter code: Transcription initiation factor IIB (114 aa).

2 repeat units span residues 1 to 17 (VEQK…AQEL) and 28 to 109 (QYVP…EQIE).

It belongs to the TFIIB family.

Its function is as follows. Stabilizes TBP binding to an archaeal box-A promoter. Also responsible for recruiting RNA polymerase II to the pre-initiation complex (DNA-TBP-TFIIB). This is Transcription initiation factor IIB (tfb) from Haloarcula vallismortis (Halobacterium vallismortis).